Consider the following 1432-residue polypeptide: uncharacterized protein (1432 aa).

Disordered regions lie at residues 1–72 (MDTI…NYYN), 208–237 (NKIENNNNNNNNKINNENNNEKNKNNNNGQ), 280–335 (ERNE…ENNL), 531–607 (IVKS…NNSS), 690–712 (QNKSPLISPSLSKSNTTTTTTTT), 738–801 (NNTL…NGGR), 896–950 (QSNN…SPPT), 1044–1076 (NINSNSNNNNNNNNNNNNNNNNNNNNYNNNNNN), and 1303–1359 (NNNN…NTTP). 3 stretches are compositionally biased toward low complexity: residues 14 to 72 (INNN…NYYN), 208 to 225 (NKIENNNNNNNNKINNEN), and 284 to 300 (LTSPASSLPSLPSLPSS). Acidic residues predominate over residues 315–325 (QEEEEEEEEED). Composition is skewed to low complexity over residues 536–575 (SSSNLNKINQNNQNNNNNNIINNNNNNNNQNNTTTNNKNK), 583–607 (DNNTVFNNNTTTTNNNNNNNNNNSS), 691–712 (NKSPLISPSLSKSNTTTTTTTT), 744–779 (NMNNNNNNNNNNNNNNNNNNNNNNNNNNNNNNNSNN), and 896–944 (QSNN…SSSN). A compositionally biased stretch (gly residues) spans 1311 to 1320 (NGNGNGGING). A compositionally biased stretch (low complexity) spans 1321 to 1333 (NNGNNSGSNNKEN). The span at 1334–1346 (GGTGAGIGGGGGL) shows a compositional bias: gly residues. Low complexity predominate over residues 1347 to 1359 (QLPNNNNNNNTTP).

This is an uncharacterized protein from Dictyostelium discoideum (Social amoeba).